The primary structure comprises 197 residues: Lipoprotein LprI (197 aa).

The first 15 residues, 1-15 (MRWIGVLVTALVLSA), serve as a signal peptide directing secretion. Cys-16 carries N-palmitoyl cysteine lipidation. The S-diacylglycerol cysteine moiety is linked to residue Cys-16.

The protein in the C-terminal section; belongs to the MliC family. As to quaternary structure, probably a homodimer. Glycosylated.

It localises to the cell membrane. Its subcellular location is the secreted. The protein resides in the cell wall. It is found in the cell surface. Strongly binds and inhibits lysozyme, may help bacteria survive in lysozyme-producing host cells such as monocyte-derived macrophages. The protein is Lipoprotein LprI (lprI) of Mycobacterium bovis (strain ATCC BAA-935 / AF2122/97).